A 46-amino-acid polypeptide reads, in one-letter code: Bottromycin D (46 aa).

Positions M10–V46 are excised as a propeptide.

Post-translationally, the precursor peptide is first ribosomally synthesized and then highly tailored by specific enzymes to yield the final natural product. These modifications include several methylations, cyclization and the formation of t-Leu and Thia-beta-Ala residues.

Its subcellular location is the secreted. In terms of biological role, bottromycin D is a ribosomally synthesized and post-translationally modified peptide (RiPP) that displays antibiotic activity against methicillin-resistant S.aureus (MRSA). The polypeptide is Bottromycin D (Streptomyces sp).